The following is a 760-amino-acid chain: Histone-lysine N-methyltransferase EZH2 (760 aa).

2 disordered regions span residues 208 to 231 and 356 to 444; these read KDDA…SKKF and PERA…PENV. A compositionally biased stretch (basic residues) spans 361–373; it reads TPSKRSTGRRRGR. Positions 375-388 are enriched in polar residues; it reads PNSNSRPSTPTVNS. Positions 389–400 are enriched in basic and acidic residues; it reads ETKDTDSDREGG. The region spanning 517-619 is the CXC domain; sequence CRKIQLKKDG…SKNVSCKNCS (103 aa). One can recognise an SET domain in the interval 626-741; that stretch reads KHLLLAPSDV…TGEELFFDYR (116 aa).

The protein belongs to the class V-like SAM-binding methyltransferase superfamily. Histone-lysine methyltransferase family. EZ subfamily. In terms of assembly, component of the prc2/eed-ezh2 complex.

The protein resides in the nucleus. The catalysed reaction is L-lysyl(27)-[histone H3] + 3 S-adenosyl-L-methionine = N(6),N(6),N(6)-trimethyl-L-lysyl(27)-[histone H3] + 3 S-adenosyl-L-homocysteine + 3 H(+). In terms of biological role, polycomb group (PcG) protein. Catalytic subunit of the prc2/eed-ezh2 complex, which methylates 'Lys-9' and 'Lys-27' of histone H3, leading to transcriptional repression of the affected target gene. May regulate the circadian clock via histone methylation at the promoter of the circadian genes. This Danio rerio (Zebrafish) protein is Histone-lysine N-methyltransferase EZH2 (ezh2).